Reading from the N-terminus, the 64-residue chain is Prokaryotic ubiquitin-like protein Pup (64 aa).

The segment covering 1 to 10 has biased composition (polar residues); the sequence is MNQNGSQIHS. Positions 1–32 are disordered; it reads MNQNGSQIHSDGNGHSDDTDTPGVSAGQVSVN. An ARC ATPase binding region spans residues 20–58; the sequence is DTPGVSAGQVSVNTAGVDDLLDEIDGLLESNAEEFVRSY. Deamidated glutamine is present on Q64. An Isoglutamyl lysine isopeptide (Gln-Lys) (interchain with K-? in acceptor proteins) cross-link involves residue Q64.

Belongs to the prokaryotic ubiquitin-like protein family. As to quaternary structure, strongly interacts with the proteasome-associated ATPase ARC through a hydrophobic interface; the interacting region of Pup lies in its C-terminal half. There is one Pup binding site per ARC hexamer ring. Post-translationally, is modified by deamidation of its C-terminal glutamine to glutamate by the deamidase Dop, a prerequisite to the subsequent pupylation process.

Its pathway is protein degradation; proteasomal Pup-dependent pathway. Its function is as follows. Protein modifier that is covalently attached to lysine residues of substrate proteins, thereby targeting them for proteasomal degradation. The tagging system is termed pupylation. In Corynebacterium diphtheriae (strain ATCC 700971 / NCTC 13129 / Biotype gravis), this protein is Prokaryotic ubiquitin-like protein Pup.